Consider the following 391-residue polypeptide: Casein kinase II subunit alpha 3 (391 aa).

Residues 39–324 form the Protein kinase domain; it reads YQLVRKLGRG…AREAMEHPYF (286 aa). Residues 45-53 and K68 contribute to the ATP site; that span reads LGRGKYSEV. D156 (proton acceptor) is an active-site residue.

It belongs to the protein kinase superfamily. Ser/Thr protein kinase family. CK2 subfamily. Heterotetramer composed of two catalytic subunits (alpha chain and/or alpha' chain) and two regulatory subunits (beta chains). Interacts with PML. Detected in blood platelets and megakaryocyte cell lines. Poorly expressed in lung. Highly expressed in lung tumor tissues.

It catalyses the reaction L-seryl-[protein] + ATP = O-phospho-L-seryl-[protein] + ADP + H(+). The enzyme catalyses L-threonyl-[protein] + ATP = O-phospho-L-threonyl-[protein] + ADP + H(+). In terms of biological role, probable catalytic subunit of a constitutively active serine/threonine-protein kinase complex that phosphorylates a large number of substrates containing acidic residues C-terminal to the phosphorylated serine or threonine. Amplification-dependent oncogene; promotes cell proliferation and tumorigenesis by down-regulating expression of the tumor suppressor protein, PML. May play a role in the pathogenesis of the lung cancer development and progression. This Homo sapiens (Human) protein is Casein kinase II subunit alpha 3 (CSNK2A3).